Here is a 298-residue protein sequence, read N- to C-terminus: HTH-type transcriptional regulator ArgP (298 aa).

Residues 4 to 60 (LDYKWIEALDAVVAQGGFERAAEELYISQSAVSQRIKQLERFLAQPVLIREQPPKPT) enclose the HTH lysR-type domain. A DNA-binding region (H-T-H motif) is located at residues 21–40 (FERAAEELYISQSAVSQRIK).

Belongs to the LysR transcriptional regulatory family. In terms of assembly, homodimer.

In terms of biological role, controls the transcription of genes involved in arginine and lysine metabolism. This is HTH-type transcriptional regulator ArgP from Vibrio vulnificus (strain CMCP6).